Consider the following 369-residue polypeptide: Anhydro-N-acetylmuramic acid kinase (369 aa).

12–19 (GTSMDGVD) is a binding site for ATP.

Belongs to the anhydro-N-acetylmuramic acid kinase family.

It catalyses the reaction 1,6-anhydro-N-acetyl-beta-muramate + ATP + H2O = N-acetyl-D-muramate 6-phosphate + ADP + H(+). The protein operates within amino-sugar metabolism; 1,6-anhydro-N-acetylmuramate degradation. Its pathway is cell wall biogenesis; peptidoglycan recycling. Functionally, catalyzes the specific phosphorylation of 1,6-anhydro-N-acetylmuramic acid (anhMurNAc) with the simultaneous cleavage of the 1,6-anhydro ring, generating MurNAc-6-P. Is required for the utilization of anhMurNAc either imported from the medium or derived from its own cell wall murein, and thus plays a role in cell wall recycling. The chain is Anhydro-N-acetylmuramic acid kinase from Shewanella loihica (strain ATCC BAA-1088 / PV-4).